Consider the following 642-residue polypeptide: Threonine--tRNA ligase (642 aa).

Residues 1–61 (MPVIRFYDGS…REDAFIEFVD (61 aa)) form the TGS domain. A catalytic region spans residues 243 to 534 (DHRKIGKFLQ…LIEECSGNLP (292 aa)). C334, H385, and H511 together coordinate Zn(2+).

Belongs to the class-II aminoacyl-tRNA synthetase family. As to quaternary structure, homodimer. Zn(2+) is required as a cofactor.

It is found in the cytoplasm. It catalyses the reaction tRNA(Thr) + L-threonine + ATP = L-threonyl-tRNA(Thr) + AMP + diphosphate + H(+). In terms of biological role, catalyzes the attachment of threonine to tRNA(Thr) in a two-step reaction: L-threonine is first activated by ATP to form Thr-AMP and then transferred to the acceptor end of tRNA(Thr). Also edits incorrectly charged L-seryl-tRNA(Thr). The sequence is that of Threonine--tRNA ligase from Buchnera aphidicola subsp. Acyrthosiphon pisum (strain Tuc7).